We begin with the raw amino-acid sequence, 233 residues long: DNA repair protein RecO (233 aa).

The protein belongs to the RecO family.

Involved in DNA repair and RecF pathway recombination. This is DNA repair protein RecO from Psychromonas ingrahamii (strain DSM 17664 / CCUG 51855 / 37).